A 188-amino-acid polypeptide reads, in one-letter code: dCTP deaminase (188 aa).

Residues 111–116 (KSTYAR), 135–137 (TLE), Gln156, Tyr170, Lys179, and Gln180 each bind dCTP. Glu137 serves as the catalytic Proton donor/acceptor.

It belongs to the dCTP deaminase family. As to quaternary structure, homotrimer.

It catalyses the reaction dCTP + H2O + H(+) = dUTP + NH4(+). Its pathway is pyrimidine metabolism; dUMP biosynthesis; dUMP from dCTP (dUTP route): step 1/2. In terms of biological role, catalyzes the deamination of dCTP to dUTP. In Orientia tsutsugamushi (strain Ikeda) (Rickettsia tsutsugamushi), this protein is dCTP deaminase.